A 275-amino-acid chain; its full sequence is Calcium uniporter protein, mitochondrial (275 aa).

Residues 1 to 28 constitute a mitochondrion transit peptide; it reads MNSFVIRNGFGLVRTFNTRLFTTSTQNL. Over 29-165 the chain is Mitochondrial matrix; it reads EGELKTILGQ…DRKAHRRATA (137 aa). A coiled-coil region spans residues 125–157; sequence VGLNKLIESKKSEINSLRQKIQPLEEKKQVIDR. A helical transmembrane segment spans residues 166 to 186; sequence IIWTGLGYCFAQAAILARLTW. Over 187–192 the chain is Mitochondrial intermembrane; the sequence is WDLSWD. A Selectivity filter motif is present at residues 191 to 199; that stretch reads WDIIEPVSY. Residues 193-213 traverse the membrane as a helical segment; the sequence is IIEPVSYFLTFGSVLIGYTYF. Glu195 is a Ca(2+) binding site. At 214 to 275 the chain is on the mitochondrial matrix side; the sequence is TMTKTEFTYE…ELATKYDHTH (62 aa). Positions 244-270 form a coiled coil; it reads PKEDYENLVQAIDKKEKELKELELATK.

The protein belongs to the MCU (TC 1.A.77) family. As to quaternary structure, homooligomer.

It is found in the mitochondrion inner membrane. The enzyme catalyses Ca(2+)(in) = Ca(2+)(out). Inhibited by ruthenium red or its derivative Ru360. Functionally, mitochondrial inner membrane calcium uniporter that mediates calcium uptake into mitochondria. Constitutes a pore-forming and calcium-conducting subunit. Mitochondrial calcium homeostasis plays key roles in cellular physiology and regulates cell bioenergetics, cytoplasmic calcium signals and activation of cell death pathways. Sufficient to operate as a pore-forming channel without the need of calcium-sensor or auxiliary subunit. The chain is Calcium uniporter protein, mitochondrial from Dictyostelium discoideum (Social amoeba).